The following is a 337-amino-acid chain: Glyceraldehyde-3-phosphate dehydrogenase 2, cytosolic (337 aa).

A binding to NAD region spans residues 1-151; it reads MGKIKIGING…YTSDVNIVSN (151 aa). NAD(+) contacts are provided by residues 13–14, Asp35, and Arg82; that span reads RI. Positions 152–337 are catalytic; it reads ASCTTNCLAP…DLIRHMFKTQ (186 aa). D-glyceraldehyde 3-phosphate is bound by residues 153–155, Thr184, 213–214, and Arg236; these read SCT and TG. Cys154 serves as the catalytic Nucleophile. Asn318 is a binding site for NAD(+).

It belongs to the glyceraldehyde-3-phosphate dehydrogenase family. As to quaternary structure, homotetramer. As to expression, developing seeds, seedling roots and shoots, and embryo.

The protein localises to the cytoplasm. The enzyme catalyses D-glyceraldehyde 3-phosphate + phosphate + NAD(+) = (2R)-3-phospho-glyceroyl phosphate + NADH + H(+). It participates in carbohydrate degradation; glycolysis; pyruvate from D-glyceraldehyde 3-phosphate: step 1/5. Its function is as follows. Key enzyme in glycolysis that catalyzes the first step of the pathway by converting D-glyceraldehyde 3-phosphate (G3P) into 3-phospho-D-glyceroyl phosphate. Essential for the maintenance of cellular ATP levels and carbohydrate metabolism. The chain is Glyceraldehyde-3-phosphate dehydrogenase 2, cytosolic (GAPC2) from Zea mays (Maize).